The chain runs to 258 residues: Aspartate/glutamate leucyltransferase (258 aa).

This sequence belongs to the R-transferase family. Bpt subfamily.

The protein resides in the cytoplasm. The enzyme catalyses N-terminal L-glutamyl-[protein] + L-leucyl-tRNA(Leu) = N-terminal L-leucyl-L-glutamyl-[protein] + tRNA(Leu) + H(+). The catalysed reaction is N-terminal L-aspartyl-[protein] + L-leucyl-tRNA(Leu) = N-terminal L-leucyl-L-aspartyl-[protein] + tRNA(Leu) + H(+). Functions in the N-end rule pathway of protein degradation where it conjugates Leu from its aminoacyl-tRNA to the N-termini of proteins containing an N-terminal aspartate or glutamate. This is Aspartate/glutamate leucyltransferase from Bradyrhizobium sp. (strain BTAi1 / ATCC BAA-1182).